We begin with the raw amino-acid sequence, 445 residues long: UPF0210 protein SPG_0223 (445 aa).

It belongs to the UPF0210 family. Homodimer.

This chain is UPF0210 protein SPG_0223, found in Streptococcus pneumoniae serotype 19F (strain G54).